Here is a 179-residue protein sequence, read N- to C-terminus: Isopentenyl-diphosphate Delta-isomerase (179 aa).

Mn(2+)-binding residues include histidine 25 and histidine 31. The Nudix hydrolase domain occupies 29–161 (ELHRAITVYI…PEQFTAWFQL (133 aa)). Residue cysteine 66 is part of the active site. Cysteine 66 contributes to the Mg(2+) binding site. Histidine 68 is a binding site for Mn(2+). Mg(2+) is bound at residue glutamate 86. Glutamate 111 and glutamate 113 together coordinate Mn(2+). The active site involves glutamate 113.

It belongs to the IPP isomerase type 1 family. In terms of assembly, homodimer. The cofactor is Mg(2+). Mn(2+) serves as cofactor.

It localises to the cytoplasm. It catalyses the reaction isopentenyl diphosphate = dimethylallyl diphosphate. It participates in isoprenoid biosynthesis; dimethylallyl diphosphate biosynthesis; dimethylallyl diphosphate from isopentenyl diphosphate: step 1/1. In terms of biological role, catalyzes the 1,3-allylic rearrangement of the homoallylic substrate isopentenyl (IPP) to its highly electrophilic allylic isomer, dimethylallyl diphosphate (DMAPP). This chain is Isopentenyl-diphosphate Delta-isomerase, found in Pectobacterium atrosepticum (strain SCRI 1043 / ATCC BAA-672) (Erwinia carotovora subsp. atroseptica).